Here is a 448-residue protein sequence, read N- to C-terminus: N-succinylarginine dihydrolase (448 aa).

Substrate is bound by residues 19-28 (GGLSYGNVAS), N110, and 137-138 (HR). E174 is an active-site residue. R214 lines the substrate pocket. H250 is a catalytic residue. Residues D252 and N365 each coordinate substrate. The Nucleophile role is filled by C371.

Belongs to the succinylarginine dihydrolase family. Homodimer.

It catalyses the reaction N(2)-succinyl-L-arginine + 2 H2O + 2 H(+) = N(2)-succinyl-L-ornithine + 2 NH4(+) + CO2. It functions in the pathway amino-acid degradation; L-arginine degradation via AST pathway; L-glutamate and succinate from L-arginine: step 2/5. In terms of biological role, catalyzes the hydrolysis of N(2)-succinylarginine into N(2)-succinylornithine, ammonia and CO(2). This is N-succinylarginine dihydrolase from Pseudomonas paraeruginosa (strain DSM 24068 / PA7) (Pseudomonas aeruginosa (strain PA7)).